The following is a 252-amino-acid chain: MLTIAGVEFESRLFTGTGKFSSSQLMLESIKASKSQLVTVAMKRIDLKTGADDLLSPLRQAGVRLLPNTSGARNAKEAIFAAELAREMLGTQWVKLEIHPDPKYLMPDAVETLAAAKTLCERGFIVMPYVHADPVLCRRLEEVGCAAVMPLASPIGTNQGLVTEPFIKMIIEQAKVPVVIDAGIGTPSHAAHAMELGADAVLVNTAIASSASPIEMAQCFKDAVDCGRRAFEAGLGRVQTQAVHTSPLTGFL.

Lysine 95 serves as the catalytic Schiff-base intermediate with DXP. 1-deoxy-D-xylulose 5-phosphate is bound by residues glycine 156, 182 to 183, and 204 to 205; these read AG and NT.

The protein belongs to the ThiG family. In terms of assembly, homotetramer. Forms heterodimers with either ThiH or ThiS.

It is found in the cytoplasm. The catalysed reaction is [ThiS sulfur-carrier protein]-C-terminal-Gly-aminoethanethioate + 2-iminoacetate + 1-deoxy-D-xylulose 5-phosphate = [ThiS sulfur-carrier protein]-C-terminal Gly-Gly + 2-[(2R,5Z)-2-carboxy-4-methylthiazol-5(2H)-ylidene]ethyl phosphate + 2 H2O + H(+). The protein operates within cofactor biosynthesis; thiamine diphosphate biosynthesis. Its function is as follows. Catalyzes the rearrangement of 1-deoxy-D-xylulose 5-phosphate (DXP) to produce the thiazole phosphate moiety of thiamine. Sulfur is provided by the thiocarboxylate moiety of the carrier protein ThiS. In vitro, sulfur can be provided by H(2)S. The protein is Thiazole synthase of Shewanella sp. (strain ANA-3).